The chain runs to 254 residues: Ribosomal RNA small subunit methyltransferase G (254 aa).

Residues Gly-84, Phe-89, 136–137 (VE), and Arg-155 contribute to the S-adenosyl-L-methionine site.

Belongs to the methyltransferase superfamily. RNA methyltransferase RsmG family.

Its subcellular location is the cytoplasm. In terms of biological role, specifically methylates the N7 position of a guanine in 16S rRNA. This Synechococcus sp. (strain CC9311) protein is Ribosomal RNA small subunit methyltransferase G.